A 553-amino-acid chain; its full sequence is Arginine--tRNA ligase (553 aa).

Positions 130 to 140 (ANPTGDLHIGH) match the 'HIGH' region motif.

It belongs to the class-I aminoacyl-tRNA synthetase family. As to quaternary structure, monomer.

The protein resides in the cytoplasm. It catalyses the reaction tRNA(Arg) + L-arginine + ATP = L-arginyl-tRNA(Arg) + AMP + diphosphate. The protein is Arginine--tRNA ligase of Staphylococcus epidermidis (strain ATCC 35984 / DSM 28319 / BCRC 17069 / CCUG 31568 / BM 3577 / RP62A).